The sequence spans 132 residues: Large ribosomal subunit protein uL14 (132 aa).

It belongs to the universal ribosomal protein uL14 family. As to quaternary structure, part of the 50S ribosomal subunit. Forms a cluster with proteins L3 and L24e, part of which may contact the 16S rRNA in 2 intersubunit bridges.

In terms of biological role, binds to 23S rRNA. Forms part of two intersubunit bridges in the 70S ribosome. The sequence is that of Large ribosomal subunit protein uL14 from Thermoplasma volcanium (strain ATCC 51530 / DSM 4299 / JCM 9571 / NBRC 15438 / GSS1).